Reading from the N-terminus, the 1009-residue chain is Chitin synthase 2 (1009 aa).

2 stretches are compositionally biased toward polar residues: residues Met-1–His-12 and Glu-34–Gln-62. Disordered regions lie at residues Met-1 to Gln-62 and Asp-175 to Ser-234. Over residues Glu-192–Thr-202 the composition is skewed to acidic residues. The next 7 membrane-spanning stretches (helical) occupy residues Trp-647 to Thr-667, Phe-682 to Val-702, Ile-722 to Ser-742, Ile-757 to Val-777, Leu-804 to Phe-823, Val-930 to Phe-950, and Ala-967 to Ile-987.

The protein belongs to the chitin synthase family.

It is found in the cell membrane. It catalyses the reaction [(1-&gt;4)-N-acetyl-beta-D-glucosaminyl](n) + UDP-N-acetyl-alpha-D-glucosamine = [(1-&gt;4)-N-acetyl-beta-D-glucosaminyl](n+1) + UDP + H(+). Its function is as follows. Polymerizes chitin, a structural polymer of the cell wall and septum, by transferring the sugar moiety of UDP-GlcNAc to the non-reducing end of the growing chitin polymer. The sequence is that of Chitin synthase 2 (CHS2) from Candida albicans (Yeast).